A 60-amino-acid chain; its full sequence is Mastoparan (60 aa).

A signal peptide spans M1–A27. AXPX repeat units lie at residues A27–L30, A31–S34, A35–N38, and A41–E44. Residues D28–A45 constitute a propeptide that is removed on maturation. L59 carries the leucine amide modification.

It belongs to the MCD family. Mastoparan subfamily. In terms of tissue distribution, expressed by the venom gland.

Its subcellular location is the secreted. The protein localises to the target cell membrane. Mast cell degranulating peptide. Its mast cell degranulation activity may be related to the activation of G-protein coupled receptors in mast cells as well as interaction with other proteins located in cell endosomal membranes in the mast cells. Has a membranolytic activity on human glioblastoma multiforme cells (brain tumor cells) that leads to cell necrosis. In Vespa orientalis (Oriental hornet), this protein is Mastoparan.